Reading from the N-terminus, the 688-residue chain is MAPSWWGRSGGGGVGNGGGTPVVVKMENPNWSISEVEAAEVAPGSPAGAGKAGRGKNARQITWVLLLKAHRAAGRLTGAASAALAVASAARRRVASGRTDADAAPGESTALRARSYGCIRVSLVLSLLLLAVEVAAYLQGWHLEEVASLLAVDGLFAASYAGWMRLRLDYLAPPLQFLTNACVALFMVQSIDRLVLCLGCFWIRFKGIKPVPQAAAAGKPDVEAGAGDYPMVLVQMPMCNEREVYQQSIGAVCNLDWPKSNFLVQVLDDSDDATTSALIKEEVEKWQREGVRIIYRHRVIRDGYKAGNLKSAMNCSYVKDYEFVVIFDADFQPQADFLKRTVPHFKGKDDVGLVQARWSFVNKDENLLTRLQNVNLCFHFEVEQQVNGAFLNFFGFNGTAGVWRIKALEDSGGWMERTTVEDMDIAVRAHLKGWKFVFLNDVECQCELPESYEAYRKQQHRWHSGPMQLFRLCFVDIIKSKIGFWKKFNLIFLFFLLRKLILPFYSFTLFCVILPMTMFVPEAELPAWVVCYIPATMSILNILPAPKSFPFIVPYLLFENTMSVTKFNAMISGLFQLGSAYEWVVTKKSGRSSEGDLVGLVEKHSKQQRVGSAPNLDALTKEESNPKKDSKKKKHNRIYRKELALSFLLLTAAARSLLSAQGIHFYFLLFQGVSFLVVGLDLIGEQVE.

The segment at 1–25 (MAPSWWGRSGGGGVGNGGGTPVVVK) is disordered. Positions 8 to 20 (RSGGGGVGNGGGT) are enriched in gly residues. 2 consecutive transmembrane segments (helical) span residues 121-141 (VSLVLSLLLLAVEVAAYLQGW) and 183-203 (VALFMVQSIDRLVLCLGCFWI). Residue Asp-269 is part of the active site. The substrate site is built by Asp-328 and Asp-330. The active site involves Asp-422. 2 helical membrane-spanning segments follow: residues 500-520 (LILPFYSFTLFCVILPMTMFV) and 525-545 (LPAWVVCYIPATMSILNILPA). The interval 604–635 (HSKQQRVGSAPNLDALTKEESNPKKDSKKKKH) is disordered. Over residues 619–628 (LTKEESNPKK) the composition is skewed to basic and acidic residues. Helical transmembrane passes span 638–657 (IYRKELALSFLLLTAAARSL) and 663–683 (IHFYFLLFQGVSFLVVGLDLI).

This sequence belongs to the glycosyltransferase 2 family. Plant cellulose synthase-like C subfamily.

The protein localises to the golgi apparatus membrane. Probable beta-1,4-glucan synthase rather involved in the synthesis of the xyloglucan backbone than cellulose. Seems to work simultaneously with xyloglucan 6-xylosyltransferase. Xyloglucan is a noncellulosic polysaccharides of plant cell wall and consists of a glucan backbone substituted by xylose, galactose and fucose. The protein is Probable xyloglucan glycosyltransferase 7 (CSLC7) of Oryza sativa subsp. japonica (Rice).